An 88-amino-acid polypeptide reads, in one-letter code: Cytochrome c oxidase subunit 6B2 (88 aa).

A disordered region spans residues 1-21 (MLGVQAQMPAPGQWTTPPFDP). In terms of domain architecture, CHCH spans 29–75 (TRNCYQNFLDYHRCVKTMDRRGKNTQACDYYFRVFHSLCPVSWVQRW). The short motif at 32–42 (CYQNFLDYHRC) is the Cx9C motif element. 2 disulfide bridges follow: Cys-32–Cys-67 and Cys-42–Cys-56. The Cx10C motif motif lies at 56–67 (CDYYFRVFHSLC).

Belongs to the cytochrome c oxidase subunit 6B family. Component of the cytochrome c oxidase (complex IV, CIV), a multisubunit enzyme composed of 14 subunits. The complex is composed of a catalytic core of 3 subunits MT-CO1, MT-CO2 and MT-CO3, encoded in the mitochondrial DNA, and 11 supernumerary subunits COX4I, COX5A, COX5B, COX6A, COX6B, COX6C, COX7A, COX7B, COX7C, COX8 and NDUFA4, which are encoded in the nuclear genome. The complex exists as a monomer or a dimer and forms supercomplexes (SCs) in the inner mitochondrial membrane with NADH-ubiquinone oxidoreductase (complex I, CI) and ubiquinol-cytochrome c oxidoreductase (cytochrome b-c1 complex, complex III, CIII), resulting in different assemblies (supercomplex SCI(1)III(2)IV(1) and megacomplex MCI(2)III(2)IV(2)). As to expression, testis specific.

The protein resides in the mitochondrion inner membrane. The protein operates within energy metabolism; oxidative phosphorylation. In terms of biological role, component of the cytochrome c oxidase, the last enzyme in the mitochondrial electron transport chain which drives oxidative phosphorylation. The respiratory chain contains 3 multisubunit complexes succinate dehydrogenase (complex II, CII), ubiquinol-cytochrome c oxidoreductase (cytochrome b-c1 complex, complex III, CIII) and cytochrome c oxidase (complex IV, CIV), that cooperate to transfer electrons derived from NADH and succinate to molecular oxygen, creating an electrochemical gradient over the inner membrane that drives transmembrane transport and the ATP synthase. Cytochrome c oxidase is the component of the respiratory chain that catalyzes the reduction of oxygen to water. Electrons originating from reduced cytochrome c in the intermembrane space (IMS) are transferred via the dinuclear copper A center (CU(A)) of subunit 2 and heme A of subunit 1 to the active site in subunit 1, a binuclear center (BNC) formed by heme A3 and copper B (CU(B)). The BNC reduces molecular oxygen to 2 water molecules using 4 electrons from cytochrome c in the IMS and 4 protons from the mitochondrial matrix. The protein is Cytochrome c oxidase subunit 6B2 (Cox6b2) of Rattus norvegicus (Rat).